Consider the following 207-residue polypeptide: Ribosomal RNA small subunit methyltransferase G (207 aa).

Residues G74, L79, 125 to 126, and R140 each bind S-adenosyl-L-methionine; that span reads VE.

This sequence belongs to the methyltransferase superfamily. RNA methyltransferase RsmG family.

The protein resides in the cytoplasm. The catalysed reaction is guanosine(527) in 16S rRNA + S-adenosyl-L-methionine = N(7)-methylguanosine(527) in 16S rRNA + S-adenosyl-L-homocysteine. Functionally, specifically methylates the N7 position of guanine in position 527 of 16S rRNA. The chain is Ribosomal RNA small subunit methyltransferase G from Shewanella piezotolerans (strain WP3 / JCM 13877).